The sequence spans 458 residues: 5-hydroxytryptamine receptor 2C (458 aa).

The first 32 residues, 1–32 (MVNLRNAVHSFLVHLIGLLVWQSDISVSPVAA), serve as a signal peptide directing secretion. Topologically, residues 33 to 55 (IVTDIFNTSDGGRFKFPDGVQNW) are extracellular. The N-linked (GlcNAc...) asparagine glycan is linked to N39. The chain crosses the membrane as a helical span at residues 56-80 (PALSIVIIIIMTIGGNILVIMAVSM). At 81–86 (EKKLHN) the chain is on the cytoplasmic side. The helical transmembrane segment at 87 to 111 (ATNYFLMSLAIADMLVGLLVMPLSL) threads the bilayer. Residues 112 to 128 (LAILYDYVWPLPRYLCP) are Extracellular-facing. C127 and C207 form a disulfide bridge. A helical membrane pass occupies residues 129–151 (VWISLDVLFSTASIMHLCAISLD). T139 is an ergotamine binding site. Residues 151–153 (DRY) carry the DRY motif; important for ligand-induced conformation changes motif. Residues 152–167 (RYVAIRNPIEHSRFNS) are Cytoplasmic-facing. A helical membrane pass occupies residues 168 to 189 (RTKAIMKIAIVWAISIGVSVPI). Topologically, residues 190–213 (PVIGLRDEEKVFVNNTTCVLNDPN) are extracellular. The N-linked (GlcNAc...) asparagine glycan is linked to N204. An ergotamine-binding site is contributed by L209. Residues 214–236 (FVLIGSFVAFFIPLTIMVITYCL) traverse the membrane as a helical segment. The Cytoplasmic portion of the chain corresponds to 237–311 (TIYVLRRQAL…AINNERKASK (75 aa)). The disordered stretch occupies residues 274–301 (EENSANPNQDQNARRRKKKERRPRGTMQ). The segment covering 287-297 (RRRKKKERRPR) has biased composition (basic residues). The helical transmembrane segment at 312–336 (VLGIVFFVFLIMWCPFFITNILSVL) threads the bilayer. An intrachain disulfide couples C337 to C341. Residues 337–347 (CEKSCNQKLME) lie on the Extracellular side of the membrane. A helical membrane pass occupies residues 348-370 (KLLNVFVWIGYVCSGINPLVYTL). Residues 364-368 (NPLVY) carry the NPxxY motif; important for ligand-induced conformation changes and signaling motif. The Cytoplasmic portion of the chain corresponds to 371–458 (FNKIYRRAFS…SVVSERISSV (88 aa)). A PDZ-binding motif is present at residues 456-458 (SSV).

This sequence belongs to the G-protein coupled receptor 1 family. In terms of assembly, interacts with MPDZ. Interacts with ARRB2. Interacts with MPP3; this interaction stabilizes the receptor at the plasma membrane and prevents the desensitization of the HTR2C receptor-mediated calcium response. N-glycosylated. As to expression, detected in brain.

It is found in the cell membrane. With respect to regulation, inhibited by inverse agonist ritanserin. G-protein coupled receptor for 5-hydroxytryptamine (serotonin). Also functions as a receptor for various drugs and psychoactive substances, including ergot alkaloid derivatives, 1-2,5,-dimethoxy-4-iodophenyl-2-aminopropane (DOI) and lysergic acid diethylamide (LSD). Ligand binding causes a conformation change that triggers signaling via guanine nucleotide-binding proteins (G proteins) and modulates the activity of downstream effectors. HTR2C is coupled to G(q)/G(11) G alpha proteins and activates phospholipase C-beta, releasing diacylglycerol (DAG) and inositol 1,4,5-trisphosphate (IP3) second messengers that modulate the activity of phosphatidylinositol 3-kinase and promote the release of Ca(2+) ions from intracellular stores, respectively. Beta-arrestin family members inhibit signaling via G proteins and mediate activation of alternative signaling pathways. Regulates neuronal activity via the activation of short transient receptor potential calcium channels in the brain, and thereby modulates the activation of pro-opiomelanocortin neurons and the release of CRH that then regulates the release of corticosterone. Plays a role in the regulation of appetite and eating behavior, responses to anxiogenic stimuli and stress. Plays a role in insulin sensitivity and glucose homeostasis. The chain is 5-hydroxytryptamine receptor 2C from Homo sapiens (Human).